A 150-amino-acid chain; its full sequence is Ribosomal RNA large subunit methyltransferase H (150 aa).

Residues alanine 100 and 118-123 (LSEMTF) contribute to the S-adenosyl-L-methionine site.

It belongs to the RNA methyltransferase RlmH family. As to quaternary structure, homodimer.

The protein localises to the cytoplasm. It carries out the reaction pseudouridine(1915) in 23S rRNA + S-adenosyl-L-methionine = N(3)-methylpseudouridine(1915) in 23S rRNA + S-adenosyl-L-homocysteine + H(+). Functionally, specifically methylates the pseudouridine at position 1915 (m3Psi1915) in 23S rRNA. In Helicobacter pylori (strain P12), this protein is Ribosomal RNA large subunit methyltransferase H.